We begin with the raw amino-acid sequence, 164 residues long: 3-isopropylmalate dehydratase small subunit 2 (164 aa).

The protein belongs to the LeuD family. LeuD type 2 subfamily. As to quaternary structure, heterodimer of LeuC and LeuD.

It carries out the reaction (2R,3S)-3-isopropylmalate = (2S)-2-isopropylmalate. The protein operates within amino-acid biosynthesis; L-leucine biosynthesis; L-leucine from 3-methyl-2-oxobutanoate: step 2/4. Catalyzes the isomerization between 2-isopropylmalate and 3-isopropylmalate, via the formation of 2-isopropylmaleate. This chain is 3-isopropylmalate dehydratase small subunit 2 (leuD2), found in Pyrococcus furiosus (strain ATCC 43587 / DSM 3638 / JCM 8422 / Vc1).